Reading from the N-terminus, the 264-residue chain is MTVINGIILSTRQYKDNDLLVRILTETGGLRTFLARGAKKPKSALGSALQPHAVLSFEGAFPKNNQGLGYINDIQTIKIYQRLIDDIEVNAYAALIASLIDQTFEEGEQLTRWYNQFVLGLQKLDEGLDPQIIANIFEIQLLVPLGVAPNWRQDPISGQSVGQFDYSEKYNGIISDKHYDLDDHRLMLDQKTVFYLRQFSIIDLRQINQINISETTKRGLQRVIDHIYDNQIGLKPKAKTFIEQMHAWQNTLINFRQNGEGKSE.

It belongs to the RecO family.

Its function is as follows. Involved in DNA repair and RecF pathway recombination. The polypeptide is DNA repair protein RecO (Leuconostoc citreum (strain KM20)).